The chain runs to 423 residues: UDP-N-acetylglucosamine 1-carboxyvinyltransferase 1 (423 aa).

23–24 (KN) is a binding site for phosphoenolpyruvate. Position 96 (Arg-96) interacts with UDP-N-acetyl-alpha-D-glucosamine. Cys-120 functions as the Proton donor in the catalytic mechanism. Cys-120 bears the 2-(S-cysteinyl)pyruvic acid O-phosphothioketal mark. 2 residues coordinate UDP-N-acetyl-alpha-D-glucosamine: Asp-309 and Val-331.

This sequence belongs to the EPSP synthase family. MurA subfamily.

Its subcellular location is the cytoplasm. The enzyme catalyses phosphoenolpyruvate + UDP-N-acetyl-alpha-D-glucosamine = UDP-N-acetyl-3-O-(1-carboxyvinyl)-alpha-D-glucosamine + phosphate. The protein operates within cell wall biogenesis; peptidoglycan biosynthesis. Cell wall formation. Adds enolpyruvyl to UDP-N-acetylglucosamine. The sequence is that of UDP-N-acetylglucosamine 1-carboxyvinyltransferase 1 from Streptococcus pyogenes serotype M3 (strain ATCC BAA-595 / MGAS315).